A 340-amino-acid polypeptide reads, in one-letter code: Anthranilate phosphoribosyltransferase (340 aa).

5-phospho-alpha-D-ribose 1-diphosphate-binding positions include Gly-80, 83-84, Thr-88, 90-93, 108-116, and Ser-120; these read GD, NIST, and KHGNRAMSS. Residue Gly-80 participates in anthranilate binding. Ser-92 is a binding site for Mg(2+). Asn-111 provides a ligand contact to anthranilate. Anthranilate is bound at residue Arg-166. Residues Asp-225 and Glu-226 each contribute to the Mg(2+) site.

The protein belongs to the anthranilate phosphoribosyltransferase family. In terms of assembly, homodimer. Requires Mg(2+) as cofactor.

The enzyme catalyses N-(5-phospho-beta-D-ribosyl)anthranilate + diphosphate = 5-phospho-alpha-D-ribose 1-diphosphate + anthranilate. Its pathway is amino-acid biosynthesis; L-tryptophan biosynthesis; L-tryptophan from chorismate: step 2/5. In terms of biological role, catalyzes the transfer of the phosphoribosyl group of 5-phosphorylribose-1-pyrophosphate (PRPP) to anthranilate to yield N-(5'-phosphoribosyl)-anthranilate (PRA). This Chloroflexus aggregans (strain MD-66 / DSM 9485) protein is Anthranilate phosphoribosyltransferase.